Reading from the N-terminus, the 125-residue chain is Large ribosomal subunit protein bL12 (125 aa).

Belongs to the bacterial ribosomal protein bL12 family. As to quaternary structure, homodimer. Part of the ribosomal stalk of the 50S ribosomal subunit. Forms a multimeric L10(L12)X complex, where L10 forms an elongated spine to which 2 to 4 L12 dimers bind in a sequential fashion. Binds GTP-bound translation factors.

Functionally, forms part of the ribosomal stalk which helps the ribosome interact with GTP-bound translation factors. Is thus essential for accurate translation. This Parabacteroides distasonis (strain ATCC 8503 / DSM 20701 / CIP 104284 / JCM 5825 / NCTC 11152) protein is Large ribosomal subunit protein bL12.